The following is a 229-amino-acid chain: Heptaprenylglyceryl phosphate synthase (229 aa).

Lys12 serves as a coordination point for sn-glycerol 1-phosphate. Asp14 and Ser40 together coordinate Mg(2+). Sn-glycerol 1-phosphate is bound by residues 159-164 (YLEYSG), Gly189, and 209-210 (GN).

Belongs to the GGGP/HepGP synthase family. Group I subfamily. Homodimer. It depends on Mg(2+) as a cofactor.

The catalysed reaction is sn-glycerol 1-phosphate + all-trans-heptaprenyl diphosphate = 3-heptaprenyl-sn-glycero-1-phosphate + diphosphate. The protein operates within membrane lipid metabolism; glycerophospholipid metabolism. Its function is as follows. Prenyltransferase that catalyzes in vivo the transfer of the heptaprenyl moiety of heptaprenyl pyrophosphate (HepPP; 35 carbon atoms) to the C3 hydroxyl of sn-glycerol-1-phosphate (G1P), producing heptaprenylglyceryl phosphate (HepGP). This reaction is an ether-bond-formation step in the biosynthesis of archaea-type G1P-based membrane lipids found in Bacillales. This is Heptaprenylglyceryl phosphate synthase from Bacillus cereus (strain G9842).